Here is a 68-residue protein sequence, read N- to C-terminus: Large ribosomal subunit protein uL29 (68 aa).

It belongs to the universal ribosomal protein uL29 family.

This chain is Large ribosomal subunit protein uL29, found in Prochlorococcus marinus (strain SARG / CCMP1375 / SS120).